Reading from the N-terminus, the 767-residue chain is Serine/threonine-protein kinase DCLK2 (767 aa).

The segment at 1 to 44 (MASTRSIELEHFEERDKRPRPGSRRGAPSSSGGSSISGPKGNGL) is disordered. Over residues 7 to 19 (IELEHFEERDKRP) the composition is skewed to basic and acidic residues. Low complexity predominate over residues 24-43 (RRGAPSSSGGSSISGPKGNG). Thr61 is subject to Phosphothreonine. Doublecortin domains are found at residues 72–158 (KKAR…VDYT) and 196–279 (KLVT…AQDD). The span at 301–311 (KYSGSRSPGLS) shows a compositional bias: low complexity. The interval 301-391 (KYSGSRSPGL…GPELDRCMSP (91 aa)) is disordered. Over residues 327–338 (SAYSTAKSPVNG) the composition is skewed to polar residues. The span at 339–362 (TPSSQLSTPKSTKSSSSSPTSPGS) shows a compositional bias: low complexity. The segment covering 369–380 (ISAQGRSSSNVN) has biased composition (polar residues). Ser377 carries the phosphoserine modification. Residues 409–666 (YRIGKVIGDG…AGEILSHPWV (258 aa)) enclose the Protein kinase domain. Residues 415–423 (IGDGNFAVV) and Lys438 each bind ATP. Asp530 serves as the catalytic Proton acceptor. Ser662 is subject to Phosphoserine. Phosphothreonine is present on Thr681. Positions 721 to 734 (HCRDSSKSSREQTS) are enriched in basic and acidic residues. The tract at residues 721-767 (HCRDSSKSSREQTSAREAPPPPESPRPPGPPATSGCDPAGTWRRHRD) is disordered. Over residues 738 to 751 (APPPPESPRPPGPP) the composition is skewed to pro residues.

The protein belongs to the protein kinase superfamily. CAMK Ser/Thr protein kinase family. CaMK subfamily. Interacts with MAPK8IP1/JIP-1, MAPK8IP2/JIP-2, MAPK9/JNK2, PPP1R9B/NEURABIN-2 and actin. Binds to and stabilizes microtubules; binding affinity is strongly reduced by autophosphorylation. Autophosphorylated.

The protein resides in the cytoplasm. It is found in the cytoskeleton. The enzyme catalyses L-seryl-[protein] + ATP = O-phospho-L-seryl-[protein] + ADP + H(+). It carries out the reaction L-threonyl-[protein] + ATP = O-phospho-L-threonyl-[protein] + ADP + H(+). Its function is as follows. Protein kinase with a significantly reduced Ca(2+)+/CAM affinity and dependence compared to other members of the CaMK family. May play a role in the down-regulation of CRE-dependent gene activation probably by phosphorylation of the CREB coactivator CRTC2/TORC2 and the resulting retention of TORC2 in the cytoplasm. This Rattus norvegicus (Rat) protein is Serine/threonine-protein kinase DCLK2 (Dclk2).